The primary structure comprises 189 residues: GMP synthase [glutamine-hydrolyzing] subunit A (189 aa).

One can recognise a Glutamine amidotransferase type-1 domain in the interval 1 to 189 (MIVILNNGGQ…CKVCGFKFNE (189 aa)). Residue Cys76 is the Nucleophile of the active site. Residues His163 and Glu165 contribute to the active site.

As to quaternary structure, heterodimer composed of a glutamine amidotransferase subunit (A) and a GMP-binding subunit (B).

It catalyses the reaction XMP + L-glutamine + ATP + H2O = GMP + L-glutamate + AMP + diphosphate + 2 H(+). The protein operates within purine metabolism; GMP biosynthesis; GMP from XMP (L-Gln route): step 1/1. Its function is as follows. Catalyzes the synthesis of GMP from XMP. The sequence is that of GMP synthase [glutamine-hydrolyzing] subunit A from Methanococcus vannielii (strain ATCC 35089 / DSM 1224 / JCM 13029 / OCM 148 / SB).